The following is a 529-amino-acid chain: Meiosis 1 arrest protein (529 aa).

Disordered stretches follow at residues 180–201 (KGIQ…DESS) and 504–529 (AASK…PSHT). The span at 188-200 (SPSPTEEPSNDES) shows a compositional bias: polar residues. A Phosphoserine modification is found at serine 516.

As to expression, expressed in germ cells of the testis. Expressed from spermatogonia to spermatids. Expressed at very low levels in lung, stomach, thymus. Not detected in Sertoli cells.

The protein localises to the cytoplasm. In terms of biological role, required for meiosis I progression during spermatogenesis. In Mus musculus (Mouse), this protein is Meiosis 1 arrest protein (M1ap).